Reading from the N-terminus, the 250-residue chain is DNA repair protein RecO (250 aa).

The protein belongs to the RecO family.

Its function is as follows. Involved in DNA repair and RecF pathway recombination. In Lactobacillus acidophilus (strain ATCC 700396 / NCK56 / N2 / NCFM), this protein is DNA repair protein RecO.